Consider the following 315-residue polypeptide: Olfactory receptor 2V1 (315 aa).

A run of 7 helical transmembrane segments spans residues 31-51 (TVML…LLIY), 59-79 (PMYF…CNIV), 100-120 (IQIG…GLMA), 145-165 (IAGS…VAAM), 196-216 (FDTL…SIIV), 239-259 (LATC…AMFI), and 273-293 (KVVS…IYSL). Cysteines 98 and 180 form a disulfide.

It belongs to the G-protein coupled receptor 1 family.

The protein localises to the cell membrane. Odorant receptor. Activated by (+) and (-)-limonene. The chain is Olfactory receptor 2V1 from Mus musculus (Mouse).